The primary structure comprises 352 residues: S-adenosylmethionine:tRNA ribosyltransferase-isomerase (352 aa).

The protein belongs to the QueA family. As to quaternary structure, monomer.

The protein resides in the cytoplasm. It carries out the reaction 7-aminomethyl-7-carbaguanosine(34) in tRNA + S-adenosyl-L-methionine = epoxyqueuosine(34) in tRNA + adenine + L-methionine + 2 H(+). The protein operates within tRNA modification; tRNA-queuosine biosynthesis. Functionally, transfers and isomerizes the ribose moiety from AdoMet to the 7-aminomethyl group of 7-deazaguanine (preQ1-tRNA) to give epoxyqueuosine (oQ-tRNA). This chain is S-adenosylmethionine:tRNA ribosyltransferase-isomerase, found in Allorhizobium ampelinum (strain ATCC BAA-846 / DSM 112012 / S4) (Agrobacterium vitis (strain S4)).